A 1464-amino-acid polypeptide reads, in one-letter code: Secretory phospholipase A2 receptor (1464 aa).

Residues 1 to 22 form the signal peptide; sequence MLLSPSLLLPLLLLLGAPRGCA. Topologically, residues 23 to 1398 are extracellular; sequence EGVAAALTPE…ELPEKGPSHS (1376 aa). Positions 40–163 constitute a Ricin B-type lectin domain; it reads KGIFVIQSES…GSGGGDICEY (124 aa). 17 disulfide bridges follow: Cys53–Cys66, Cys91–Cys108, Cys180–Cys206, Cys194–Cys221, Cys262–Cys356, Cys332–Cys348, Cys408–Cys503, Cys480–Cys495, Cys619–Cys636, Cys701–Cys798, Cys776–Cys790, Cys842–Cys939, Cys916–Cys931, Cys1069–Cys1089, Cys1211–Cys1225, Cys1282–Cys1378, and Cys1356–Cys1370. Asn95 carries an N-linked (GlcNAc...) asparagine glycan. One can recognise a Fibronectin type-II domain in the interval 175-223; that stretch reads AHGMPCMFPFQYNHQWHHECTREGREDDLLWCATTSRYERDEKWGFCPD. 8 consecutive C-type lectin domains span residues 240–357, 387–504, 524–645, 675–799, 821–940, 967–1098, 1123–1234, and 1259–1379; these read NSHI…YVCK, YNRN…YVCK, HGGF…MSLC, GLAS…WICK, YQDA…SICK, FNYK…GFVC, YGNR…GAIC, and FKSN…FICK. A glycan (N-linked (GlcNAc...) asparagine) is linked at Asn456. A helical transmembrane segment spans residues 1399 to 1419; it reads IIPLAVVLTLIVIVAICTLSF. Residues 1420–1464 lie on the Cytoplasmic side of the membrane; it reads CIYKHNGGFFRRLAGFRNPYYPATNFSTVHLEENILISDLEKSDQ. The Endocytosis signal motif lies at 1437-1443; the sequence is NPYYPAT.

As to quaternary structure, interacts with sPLA2-IB/PLA2G1B; this interaction mediates intracellular signaling as well as clearance of extracellular sPLA2-IB/PLA2G1B via endocytotic pathway. Interacts with sPLA2-X/PLA2G10; this interaction mediates sPLA2-X/PLA2G10 clearance and inactivation. The secretory phospholipase A2 receptor form may be produced by the action of metalloproteinases. It contains all extracellular domains and only lacks transmembrane and cytosolic regions. It is however unclear whether this form is produced by proteolytic cleavage as suggested by some experiments, or by alternative splicing.

It localises to the cell membrane. Its subcellular location is the secreted. In terms of biological role, receptor for secretory phospholipase A2 (sPLA2). Also able to bind to snake PA2-like toxins. Although its precise function remains unclear, binding of sPLA2 to its receptor participates in both positive and negative regulation of sPLA2 functions as well as clearance of sPLA2. Binding of sPLA2-IB/PLA2G1B induces various effects depending on the cell type, such as activation of the mitogen-activated protein kinase (MAPK) cascade to induce cell proliferation, the production of lipid mediators, selective release of arachidonic acid in bone marrow-derived mast cells. In neutrophils, binding of sPLA2-IB/PLA2G1B can activate p38 MAPK to stimulate elastase release and cell adhesion. May be involved in responses in pro-inflammatory cytokine productions during endotoxic shock. Also has endocytic properties and rapidly internalizes sPLA2 ligands, which is particularly important for the clearance of extracellular sPLA2s to protect their potent enzymatic activities. The soluble secretory phospholipase A2 receptor form is circulating and acts as a negative regulator of sPLA2 functions by blocking the biological functions of sPLA2-IB/PLA2G1B and sPLA2-X/PLA2G10. The protein is Secretory phospholipase A2 receptor (PLA2R1) of Pongo abelii (Sumatran orangutan).